A 2005-amino-acid chain; its full sequence is Sodium channel protein type 2 subunit alpha (2005 aa).

Topologically, residues 1-129 (MARSVLVPPG…KLAIKILVHS (129 aa)) are cytoplasmic. A Phosphoserine modification is found at Ser-4. The disordered stretch occupies residues 28-61 (RIAEEKAKRPKQERKDEDDENGPKPNSDLEAGKS). Lys-38 participates in a covalent cross-link: Glycyl lysine isopeptide (Lys-Gly) (interchain with G-Cter in SUMO1). The stretch at 111–456 (ILTPFNPIRK…QQMLEQLKKQ (346 aa)) is one I repeat. A helical membrane pass occupies residues 130–148 (LFNVLIMCTILTNCVFMTM). Over 149-155 (SNPPDWT) the chain is Extracellular. A helical transmembrane segment spans residues 156 to 176 (KNVEYTFTGIYTFESLIKILA). Residues 177–190 (RGFCLEDFTFLRNP) lie on the Cytoplasmic side of the membrane. A helical membrane pass occupies residues 191-208 (WNWLDFTVITFAYVTEFV). Residues 209-214 (NLGNVS) are Extracellular-facing. An N-linked (GlcNAc...) asparagine glycan is attached at Asn-212. Residues 215 to 231 (ALRTFRVLRALKTISVI) traverse the membrane as a helical segment. Residues 232–250 (PGLKTIVGALIQSVKKLSD) lie on the Cytoplasmic side of the membrane. Residues 251–270 (VMILTVFCLSVFALIGLQLF) traverse the membrane as a helical segment. At 271–369 (MGNLRNKCLQ…PNYGYTSFDT (99 aa)) the chain is on the extracellular side. An intrachain disulfide couples Cys-278 to Cys-338. N-linked (GlcNAc...) asparagine glycans are attached at residues Asn-285, Asn-291, Asn-297, Asn-303, Asn-308, and Asn-340. Positions 370–394 (FSWAFLSLFRLMTQDFWENLYQLTL) form an intramembrane region, pore-forming. Residues 395-401 (RAAGKTY) lie on the Extracellular side of the membrane. The chain crosses the membrane as a helical span at residues 402–422 (MIFFVLVIFLGSFYLINLILA). Residues 423-759 (VVAMAYEEQN…HVVNLVVMDP (337 aa)) are Cytoplasmic-facing. Ser-468, Ser-471, Ser-484, Ser-526, Ser-528, Ser-531, Ser-553, Ser-554, and Ser-558 each carry phosphoserine. The segment at 494 to 529 (SSKSEKELKNRRKKKKQKEQAGEEEKEDAVRKSASE) is disordered. The segment covering 511 to 529 (KEQAGEEEKEDAVRKSASE) has biased composition (basic and acidic residues). Ser-554 carries the phosphoserine; by PKC; in vitro modification. Ser-573 and Ser-576 each carry phosphoserine; by PKC; in vitro. Ser-589, Ser-610, Ser-623, Ser-687, Ser-688, and Ser-721 each carry phosphoserine. The segment at 591–634 (NDFADDEHSTFEDNDSRRDSLFVPHRHGERRPSNVSQASRASRG) is disordered. Residues 596–610 (DEHSTFEDNDSRRDS) are compositionally biased toward basic and acidic residues. An II repeat occupies 741 to 1013 (CCKPWLKVKH…QIAVGRMQKG (273 aa)). The helical transmembrane segment at 760 to 778 (FVDLAITICIVLNTLFMAM) threads the bilayer. At 779–789 (EHYPMTEQFSS) the chain is on the extracellular side. The helical transmembrane segment at 790-809 (VLSVGNLVFTGIFTAEMFLK) threads the bilayer. Residues 810–823 (IIAMDPYYYFQEGW) lie on the Cytoplasmic side of the membrane. The helical transmembrane segment at 824–843 (NIFDGFIVSLSLMELGLANV) threads the bilayer. Topologically, residues 844–845 (EG) are extracellular. Residues 846 to 863 (LSVLRSFRLLRVFKLAKS) traverse the membrane as a helical segment. At 864–879 (WPTLNMLIKIIGNSVG) the chain is on the cytoplasmic side. A helical transmembrane segment spans residues 880–898 (ALGNLTLVLAIIVFIFAVV). Residues 899–927 (GMQLFGKSYKECVCKISNDCELPRWHMHH) lie on the Extracellular side of the membrane. A disulfide bond links Cys-912 and Cys-918. Positions 917-918 (DC) are binds SCN2B. Positions 928–948 (FFHSFLIVFRVLCGEWIETMW) form an intramembrane region, pore-forming. Residues 949–961 (DCMEVAGQTMCLT) lie on the Extracellular side of the membrane. Cys-950 and Cys-959 are disulfide-bonded. The chain crosses the membrane as a helical span at residues 962–982 (VFMMVMVIGNLVVLNLFLALL). Topologically, residues 983 to 1209 (LSSFSSDNLA…TCYKIVEHNW (227 aa)) are cytoplasmic. The tract at residues 1120–1166 (EEFSSESDMEESKEKLNATSSSEGSTVDIGAPAEGEQPEAEPEESLE) is disordered. Positions 1155–1166 (EQPEAEPEESLE) are enriched in acidic residues. The stretch at 1190 to 1504 (KGKLWWNLRK…KKYYNAMKKL (315 aa)) is one III repeat. A helical membrane pass occupies residues 1210–1227 (FETFIVFMILLSSGALAF). Residues 1228–1240 (EDIYIEQRKTIKT) are Extracellular-facing. A helical membrane pass occupies residues 1241–1259 (MLEYADKVFTYIFILEMLL). At 1260–1273 (KWVAYGFQMYFTNA) the chain is on the cytoplasmic side. A helical membrane pass occupies residues 1274–1292 (WCWLDFLIVDVSLVSLTAN). Over 1293–1300 (ALGYSELG) the chain is Extracellular. Residues 1301 to 1319 (AIKSLRTLRALRPLRALSR) traverse the membrane as a helical segment. Residues 1320–1336 (FEGMRVVVNALLGAIPS) lie on the Cytoplasmic side of the membrane. Residues 1337–1356 (IMNVLLVCLIFWLIFSIMGV) traverse the membrane as a helical segment. Over 1357-1408 (NLFAGKFYHCINYTTGEMFDVSVVNNYSECQALIESNQTARWKNVKVNFDNV) the chain is Extracellular. The cysteines at positions 1366 and 1386 are disulfide-linked. N-linked (GlcNAc...) asparagine glycans are attached at residues Asn-1368, Asn-1382, and Asn-1393. The segment at residues 1409–1430 (GLGYLSLLQVATFKGWMDIMYA) is an intramembrane region (pore-forming). Topologically, residues 1431 to 1447 (AVDSRNVELQPKYEDNL) are extracellular. The chain crosses the membrane as a helical span at residues 1448 to 1469 (YMYLYFVIFIIFGSFFTLNLFI). The Cytoplasmic segment spans residues 1470-1532 (GVIIDNFNQQ…MVFDFVTKQV (63 aa)). Ser-1506 is modified (phosphoserine; by PKC). One copy of the IV repeat lies at 1513–1811 (IPRPANKFQG…WEKFDPDATQ (299 aa)). A helical membrane pass occupies residues 1533–1550 (FDISIMILICLNMVTMMV). Over 1551–1561 (ETDDQSQEMTN) the chain is Extracellular. Residues 1562–1580 (ILYWINLVFIVLFTGECVL) traverse the membrane as a helical segment. Residues 1581-1592 (KLISLRHYYFTI) are Cytoplasmic-facing. A helical membrane pass occupies residues 1593-1610 (GWNIFDFVVVILSIVGMF). Residues 1611–1623 (LAELIEKYFVSPT) are Extracellular-facing. A helical membrane pass occupies residues 1624–1640 (LFRVIRLARIGRILRLI). Residues 1641–1659 (KGAKGIRTLLFALMMSLPA) lie on the Cytoplasmic side of the membrane. Residues 1660-1677 (LFNIGLLLFLVMFIYAIF) form a helical membrane-spanning segment. Residues 1678–1699 (GMSNFAYVKREVGIDDMFNFET) lie on the Extracellular side of the membrane. Residues 1700–1722 (FGNSMICLFQITTSAGWDGLLAP) constitute an intramembrane region (pore-forming). The Extracellular segment spans residues 1723–1752 (ILNSGPPDCDPEKDHPGSSVKGDCGNPSVG). Residues Cys-1731 and Cys-1746 are joined by a disulfide bond. A helical transmembrane segment spans residues 1753 to 1775 (IFFFVSYIIISFLVVVNMYIAVI). At 1776–2005 (LENFSVATEE…KGKDIRESKK (230 aa)) the chain is on the cytoplasmic side. Residues 1905 to 1934 (EEVSAIVIQRAYRRYLLKQKVKKVSSIYKK) enclose the IQ domain. A Phosphoserine modification is found at Ser-1930. Over residues 1933-1964 (KKDKGKEDEGTPIKEDIITDKLNENSTPEKTD) the composition is skewed to basic and acidic residues. The segment at 1933-2005 (KKDKGKEDEG…KGKDIRESKK (73 aa)) is disordered. Residues Thr-1943, Thr-1963, and Thr-1966 each carry the phosphothreonine modification. Ser-1971 carries the post-translational modification Phosphoserine. Over residues 1979–2005 (TKPEKEKFEKDKSEKEDKGKDIRESKK) the composition is skewed to basic and acidic residues.

It belongs to the sodium channel (TC 1.A.1.10) family. Nav1.2/SCN2A subfamily. In terms of assembly, heterooligomer of a large alpha subunit and a smaller beta subunit. Heterooligomer with SCN2B or SCN4B; disulfide-linked. Heterooligomer with SCN1B or SCN3B; non-covalently linked. Interacts with NEDD4L. Interacts with CALM. Interacts with TMEM233. Interacts with the conotoxin GVIIJ. Interacts with the scorpion toxin BMK M1. May be ubiquitinated by NEDD4L; which would promote its endocytosis. In terms of processing, phosphorylation at Ser-1506 by PKC in a highly conserved cytoplasmic loop slows inactivation of the sodium channel and reduces peak sodium currents. Post-translationally, sumoylated at Lys-38. Sumoylation is induced by hypoxia, increases voltage-gated sodium current and mediates the early response to acute hypoxia in neurons. Sumoylated SCN2A is located at the cell membrane. In terms of tissue distribution, expressed in brain (at protein level). Expressed in cerebellar granule neurons (at protein level).

It is found in the cell membrane. The catalysed reaction is Na(+)(in) = Na(+)(out). Mediates the voltage-dependent sodium ion permeability of excitable membranes. Assuming opened or closed conformations in response to the voltage difference across the membrane, the protein forms a sodium-selective channel through which Na(+) ions may pass in accordance with their electrochemical gradient. Implicated in the regulation of hippocampal replay occurring within sharp wave ripples (SPW-R) important for memory. The protein is Sodium channel protein type 2 subunit alpha of Rattus norvegicus (Rat).